The chain runs to 504 residues: L-carnitine/gamma-butyrobetaine antiporter (504 aa).

A run of 12 helical transmembrane segments spans residues 10–30 (IEPK…WLTV), 51–71 (WGWA…WLVF), 92–112 (IFMM…SIEI), 143–163 (GPLP…FFFV), 195–215 (FYLV…TPLV), 231–251 (LDAI…ACGL), 263–283 (SYLS…SFIM), 316–336 (WTVF…IFLA), 347–367 (LCFG…TVLG), 398–418 (WAAL…CFIA), 446–466 (LLVR…LLAL), and 475–495 (AIIA…LSFI).

Belongs to the BCCT transporter (TC 2.A.15) family. CaiT subfamily. Homotrimer.

It is found in the cell inner membrane. It catalyses the reaction 4-(trimethylamino)butanoate(in) + (R)-carnitine(out) = 4-(trimethylamino)butanoate(out) + (R)-carnitine(in). It functions in the pathway amine and polyamine metabolism; carnitine metabolism. In terms of biological role, catalyzes the exchange of L-carnitine for gamma-butyrobetaine. In Shigella flexneri serotype 5b (strain 8401), this protein is L-carnitine/gamma-butyrobetaine antiporter.